The primary structure comprises 363 residues: Anhydro-N-acetylmuramic acid kinase (363 aa).

10–17 (GTSLDGLD) lines the ATP pocket.

It belongs to the anhydro-N-acetylmuramic acid kinase family.

It carries out the reaction 1,6-anhydro-N-acetyl-beta-muramate + ATP + H2O = N-acetyl-D-muramate 6-phosphate + ADP + H(+). It functions in the pathway amino-sugar metabolism; 1,6-anhydro-N-acetylmuramate degradation. It participates in cell wall biogenesis; peptidoglycan recycling. Its function is as follows. Catalyzes the specific phosphorylation of 1,6-anhydro-N-acetylmuramic acid (anhMurNAc) with the simultaneous cleavage of the 1,6-anhydro ring, generating MurNAc-6-P. Is required for the utilization of anhMurNAc either imported from the medium or derived from its own cell wall murein, and thus plays a role in cell wall recycling. Contributes to intrinsic fosfomycin resistance in P.putida. The chain is Anhydro-N-acetylmuramic acid kinase from Pseudomonas putida (strain ATCC 47054 / DSM 6125 / CFBP 8728 / NCIMB 11950 / KT2440).